The chain runs to 313 residues: Ribosomal RNA small subunit methyltransferase H (313 aa).

S-adenosyl-L-methionine contacts are provided by residues 35 to 37, Asp55, Phe79, Asp101, and Gln108; that span reads GGH.

It belongs to the methyltransferase superfamily. RsmH family.

It localises to the cytoplasm. The enzyme catalyses cytidine(1402) in 16S rRNA + S-adenosyl-L-methionine = N(4)-methylcytidine(1402) in 16S rRNA + S-adenosyl-L-homocysteine + H(+). Its function is as follows. Specifically methylates the N4 position of cytidine in position 1402 (C1402) of 16S rRNA. The polypeptide is Ribosomal RNA small subunit methyltransferase H (Klebsiella pneumoniae subsp. pneumoniae (strain ATCC 700721 / MGH 78578)).